Reading from the N-terminus, the 178-residue chain is Probable chorismate pyruvate-lyase (178 aa).

Residues Arg-72, Leu-110, and Glu-169 each coordinate substrate.

Belongs to the UbiC family.

The protein localises to the cytoplasm. It catalyses the reaction chorismate = 4-hydroxybenzoate + pyruvate. The protein operates within cofactor biosynthesis; ubiquinone biosynthesis. In terms of biological role, removes the pyruvyl group from chorismate, with concomitant aromatization of the ring, to provide 4-hydroxybenzoate (4HB) for the ubiquinone pathway. The polypeptide is Probable chorismate pyruvate-lyase (Nitrosomonas europaea (strain ATCC 19718 / CIP 103999 / KCTC 2705 / NBRC 14298)).